The primary structure comprises 68 residues: Small ribosomal subunit protein bS21 (68 aa).

It belongs to the bacterial ribosomal protein bS21 family.

This chain is Small ribosomal subunit protein bS21, found in Ruegeria pomeroyi (strain ATCC 700808 / DSM 15171 / DSS-3) (Silicibacter pomeroyi).